A 227-amino-acid polypeptide reads, in one-letter code: Protein GrpE (227 aa).

Over residues 1–18 the composition is skewed to polar residues; it reads MTQGNQKTEGNPPEQVTV. Disordered stretches follow at residues 1-57 and 193-227; these read MTQG…GAAT and TEEGDGEAAATDEPTAAAAETRPPESDDNAGASGD. The segment covering 19-35 has biased composition (basic and acidic residues); sequence TDKRRIDPETGEVRHVP. Composition is skewed to low complexity over residues 41-50 and 199-213; these read GGTAPQAATA and EAAATDEPTAAAAET.

The protein belongs to the GrpE family. In terms of assembly, homodimer.

It is found in the cytoplasm. Participates actively in the response to hyperosmotic and heat shock by preventing the aggregation of stress-denatured proteins, in association with DnaK and GrpE. It is the nucleotide exchange factor for DnaK and may function as a thermosensor. Unfolded proteins bind initially to DnaJ; upon interaction with the DnaJ-bound protein, DnaK hydrolyzes its bound ATP, resulting in the formation of a stable complex. GrpE releases ADP from DnaK; ATP binding to DnaK triggers the release of the substrate protein, thus completing the reaction cycle. Several rounds of ATP-dependent interactions between DnaJ, DnaK and GrpE are required for fully efficient folding. The protein is Protein GrpE of Mycolicibacterium paratuberculosis (strain ATCC BAA-968 / K-10) (Mycobacterium paratuberculosis).